Reading from the N-terminus, the 241-residue chain is Small ribosomal subunit protein uS2 (241 aa).

Belongs to the universal ribosomal protein uS2 family.

The chain is Small ribosomal subunit protein uS2 from Pectobacterium carotovorum subsp. carotovorum (strain PC1).